The primary structure comprises 196 residues: Histone H1.0 (196 aa).

2 disordered regions span residues 1 to 29 (MTEN…PKYS) and 78 to 196 (SGTL…GRKK). The 74-residue stretch at 24–97 (DHPKYSDMIL…GASGSFRLAK (74 aa)) folds into the H15 domain. The span at 104-196 (PAKKPKKEIK…ASPKKSGRKK (93 aa)) shows a compositional bias: basic residues.

Belongs to the histone H1/H5 family.

Its subcellular location is the nucleus. The protein localises to the chromosome. Functionally, histones H1 are necessary for the condensation of nucleosome chains into higher-order structures. The histones H1.0 are found in cells that are in terminal stages of differentiation or that have low rates of cell division. This Xenopus tropicalis (Western clawed frog) protein is Histone H1.0 (h1-0).